Here is a 285-residue protein sequence, read N- to C-terminus: MANIDLHFHSRTSDGALTPTEVIDRAAARAPALLALTDHDCTGGLAEAAAAAARRGIPFLNGVEVSVSWGRHTVHIVGLGIDPAEPALAAGLKSIREGRLERARQMGASLEAAGIAGCFDGAMRWCDNPEMISRTHFARHLVDSGAVKDMRTVFRKYLTPGKPGYVSHQWASLEDAVGWIVGAGGMAVIAHPGRYDMGRTLIERLILDFQAAGGQGIEVASGSHSLDDMHKFALHADRHGLYASSGSDFHAPGEGGRDVGHTEDLPPICRPIWRELEARILRPAD.

Mn(2+) contacts are provided by histidine 7, histidine 9, aspartate 14, histidine 39, glutamate 64, and histidine 75. Positions 14 and 39 each coordinate substrate. Substrate contacts are provided by residues arginine 99–arginine 102 and arginine 134–threonine 135. Residues histidine 191, aspartate 248, and histidine 250 each contribute to the Mn(2+) site. Histidine 250 contacts substrate.

The protein belongs to the PHP family. As to quaternary structure, monomer. Mn(2+) serves as cofactor.

It catalyses the reaction a ribonucleoside 3',5'-bisphosphate + H2O = a ribonucleoside 5'-phosphate + phosphate. Hydrolyzes 3',5'-bisphosphonucleosides (pGp, pCp, pUp, and pIp) to nucleoside 5'-phosphate and orthophosphate. Has similar catalytic efficiencies with all the bases. Also shows activity with ribonucleoside 2'-deoxyribonucleoside 3',5'-bisphosphates. Does not show activity with nucleoside 2',5'-bisphosphates. This chain is 3',5'-nucleoside bisphosphate phosphatase, found in Chromobacterium violaceum (strain ATCC 12472 / DSM 30191 / JCM 1249 / CCUG 213 / NBRC 12614 / NCIMB 9131 / NCTC 9757 / MK).